The primary structure comprises 206 residues: U-scoloptoxin(08)-Cw1a (206 aa).

The first 24 residues, Met1–Ala24, serve as a signal peptide directing secretion. Positions Ser25–Arg164 are excised as a propeptide. One copy of the RLWRNWE 1; approximate repeat lies at Arg37–Glu43. Residues Arg71–Glu77 form an RLWRNWE 2; approximate repeat. One copy of the RLWRNWE 3; approximate repeat lies at Arg104 to Glu110. An RLWRNWE 4 repeat occupies Arg137–Glu143. The stretch at Arg164–Asp170 is one RLWRNWE 5; approximate repeat.

The protein belongs to the scoloptoxin-08 family. Post-translationally, contains 3 disulfide bonds. As to expression, expressed by the venom gland.

The protein localises to the secreted. The protein is U-scoloptoxin(08)-Cw1a of Cormocephalus westwoodi (Westwood's green centipede).